A 214-amino-acid chain; its full sequence is Ribosomal RNA small subunit methyltransferase G (214 aa).

S-adenosyl-L-methionine contacts are provided by residues Gly81, Met86, 132 to 133 (AE), and Arg147.

This sequence belongs to the methyltransferase superfamily. RNA methyltransferase RsmG family.

Its subcellular location is the cytoplasm. The catalysed reaction is guanosine(527) in 16S rRNA + S-adenosyl-L-methionine = N(7)-methylguanosine(527) in 16S rRNA + S-adenosyl-L-homocysteine. In terms of biological role, specifically methylates the N7 position of guanine in position 527 of 16S rRNA. The chain is Ribosomal RNA small subunit methyltransferase G from Pseudomonas syringae pv. syringae (strain B728a).